Here is a 270-residue protein sequence, read N- to C-terminus: UPF0354 protein BCAH187_A4826 (270 aa).

The protein belongs to the UPF0354 family.

The chain is UPF0354 protein BCAH187_A4826 from Bacillus cereus (strain AH187).